A 196-amino-acid chain; its full sequence is Nucleoid occlusion factor SlmA (196 aa).

One can recognise an HTH tetR-type domain in the interval 6 to 66 (RNRREEILQA…GLIEFVEDTL (61 aa)). The H-T-H motif DNA-binding region spans 29-48 (TTAKLAANLGVSEAALYRHF). The stretch at 108–135 (DALMGEHDRLRGRMEDLFNRIESSIKQI) forms a coiled coil.

The protein belongs to the nucleoid occlusion factor SlmA family. Homodimer. Interacts with FtsZ.

It localises to the cytoplasm. The protein resides in the nucleoid. Functionally, required for nucleoid occlusion (NO) phenomenon, which prevents Z-ring formation and cell division over the nucleoid. Acts as a DNA-associated cell division inhibitor that binds simultaneously chromosomal DNA and FtsZ, and disrupts the assembly of FtsZ polymers. SlmA-DNA-binding sequences (SBS) are dispersed on non-Ter regions of the chromosome, preventing FtsZ polymerization at these regions. The protein is Nucleoid occlusion factor SlmA of Idiomarina loihiensis (strain ATCC BAA-735 / DSM 15497 / L2-TR).